A 168-amino-acid polypeptide reads, in one-letter code: Phosphopantetheine adenylyltransferase (168 aa).

Thr11 is a substrate binding site. ATP contacts are provided by residues 11 to 12 and His19; that span reads TF. Substrate contacts are provided by Lys43, Thr75, and Arg89. ATP contacts are provided by residues 90–92, Glu100, and 125–131; these read GIR and WSYMSSS.

This sequence belongs to the bacterial CoaD family. Homohexamer. Mg(2+) serves as cofactor.

Its subcellular location is the cytoplasm. It catalyses the reaction (R)-4'-phosphopantetheine + ATP + H(+) = 3'-dephospho-CoA + diphosphate. The protein operates within cofactor biosynthesis; coenzyme A biosynthesis; CoA from (R)-pantothenate: step 4/5. Reversibly transfers an adenylyl group from ATP to 4'-phosphopantetheine, yielding dephospho-CoA (dPCoA) and pyrophosphate. This chain is Phosphopantetheine adenylyltransferase, found in Wigglesworthia glossinidia brevipalpis.